We begin with the raw amino-acid sequence, 67 residues long: Surface composition regulator (67 aa).

The protein belongs to the GlgS family.

Functionally, major determinant of cell surface composition. Negatively regulates motility, adhesion and synthesis of biofilm exopolysaccharides. In Salmonella enteritidis PT4 (strain P125109), this protein is Surface composition regulator.